Here is a 630-residue protein sequence, read N- to C-terminus: NUAK family SNF1-like kinase 2 (630 aa).

Residue M1 is modified to N-acetylmethionine. One can recognise a Protein kinase domain in the interval 57 to 307 (YEFLETLGKG…LEDVASHWWV (251 aa)). ATP is bound by residues 63–71 (LGKGTYGKV) and K85. D179 (proton acceptor) is an active-site residue. At T212 the chain carries Phosphothreonine. Disordered stretches follow at residues 361–504 (HVPG…RLHR) and 521–566 (GTAP…LDLP). The span at 464-476 (SGYYSSPEPSESG) shows a compositional bias: low complexity. Phosphoserine is present on residues S529, S550, S553, and S579.

It belongs to the protein kinase superfamily. CAMK Ser/Thr protein kinase family. SNF1 subfamily. Requires Mg(2+) as cofactor. Post-translationally, phosphorylated at Thr-212 by STK11/LKB1 in complex with STE20-related adapter-alpha (STRADA) pseudo kinase and CAB39. Autophosphorylation is also possible at Thr-212. Expressed in liver, skin, testis, uterus, ovary, adrenal gland and brain (at protein level). Expressed in kidney, heart, skin, spleen, lung, uterus, liver and the exocrine and endocrine compartments of the human pancreas. A kinase-inactive isoform also appears to be expressed in the skin, spleen, lung, uterus, liver and testis.

The enzyme catalyses L-seryl-[protein] + ATP = O-phospho-L-seryl-[protein] + ADP + H(+). The catalysed reaction is L-threonyl-[protein] + ATP = O-phospho-L-threonyl-[protein] + ADP + H(+). With respect to regulation, activated by phosphorylation on Thr-212 by STK11 in complex with STE20-related adapter-alpha (STRAD alpha) pseudo kinase and CAB39. Functionally, stress-activated kinase involved in tolerance to glucose starvation. Induces cell-cell detachment by increasing F-actin conversion to G-actin. Expression is induced by CD95 or TNF-alpha, via NF-kappa-B. Protects cells from CD95-mediated apoptosis and is required for the increased motility and invasiveness of CD95-activated tumor cells. Phosphorylates LATS1 and LATS2. Plays a key role in neural tube closure during embryonic development through LATS2 phosphorylation and regulation of the nuclear localization of YAP1 a critical downstream regulatory target in the Hippo signaling pathway. This chain is NUAK family SNF1-like kinase 2, found in Rattus norvegicus (Rat).